The sequence spans 107 residues: FK506-binding protein 1 (107 aa).

The region spanning 19 to 107 (GSNVTVHHAG…VFEVELITFK (89 aa)) is the PPIase FKBP-type domain.

The protein belongs to the FKBP-type PPIase family.

The catalysed reaction is [protein]-peptidylproline (omega=180) = [protein]-peptidylproline (omega=0). Its activity is regulated as follows. Inhibited by both FK506 and rapamycin. Its function is as follows. PPIases accelerate the folding of proteins by catalyzing the cis-trans isomerization of proline imidic peptide bonds in oligopeptides. The polypeptide is FK506-binding protein 1 (fkbp1) (Dictyostelium discoideum (Social amoeba)).